The following is a 433-amino-acid chain: Serine--tRNA ligase (433 aa).

235-237 is a binding site for L-serine; the sequence is TSE. 266–268 provides a ligand contact to ATP; the sequence is RSE. Glutamate 289 is a binding site for L-serine. An ATP-binding site is contributed by 353-356; the sequence is EISS. Residue serine 388 coordinates L-serine.

Belongs to the class-II aminoacyl-tRNA synthetase family. Type-1 seryl-tRNA synthetase subfamily. As to quaternary structure, homodimer. The tRNA molecule binds across the dimer.

The protein resides in the cytoplasm. It catalyses the reaction tRNA(Ser) + L-serine + ATP = L-seryl-tRNA(Ser) + AMP + diphosphate + H(+). The catalysed reaction is tRNA(Sec) + L-serine + ATP = L-seryl-tRNA(Sec) + AMP + diphosphate + H(+). Its pathway is aminoacyl-tRNA biosynthesis; selenocysteinyl-tRNA(Sec) biosynthesis; L-seryl-tRNA(Sec) from L-serine and tRNA(Sec): step 1/1. Catalyzes the attachment of serine to tRNA(Ser). Is also able to aminoacylate tRNA(Sec) with serine, to form the misacylated tRNA L-seryl-tRNA(Sec), which will be further converted into selenocysteinyl-tRNA(Sec). This is Serine--tRNA ligase from Burkholderia orbicola (strain MC0-3).